Here is a 416-residue protein sequence, read N- to C-terminus: UDP-N-acetylglucosamine 1-carboxyvinyltransferase (416 aa).

A phosphoenolpyruvate-binding site is contributed by 22-23; sequence KN. R91 is a binding site for UDP-N-acetyl-alpha-D-glucosamine. Residue C115 is the Proton donor of the active site. C115 is modified (2-(S-cysteinyl)pyruvic acid O-phosphothioketal). UDP-N-acetyl-alpha-D-glucosamine is bound by residues 120–124, D305, and I327; that span reads RPIDL.

Belongs to the EPSP synthase family. MurA subfamily.

Its subcellular location is the cytoplasm. It carries out the reaction phosphoenolpyruvate + UDP-N-acetyl-alpha-D-glucosamine = UDP-N-acetyl-3-O-(1-carboxyvinyl)-alpha-D-glucosamine + phosphate. It participates in cell wall biogenesis; peptidoglycan biosynthesis. Its function is as follows. Cell wall formation. Adds enolpyruvyl to UDP-N-acetylglucosamine. The chain is UDP-N-acetylglucosamine 1-carboxyvinyltransferase from Buchnera aphidicola subsp. Acyrthosiphon pisum (strain 5A).